Consider the following 261-residue polypeptide: RING-H2 finger protein ATL58 (261 aa).

The helical transmembrane segment at 25–45 threads the bilayer; sequence AFIFSVPICFTFIILFLFYLI. The RING-type; atypical zinc finger occupies 100–142; sequence CSVCLGDYQPNDKLQQIPVCKHTFHMDCIDLWLTSHTTCPLCR. Disordered regions lie at residues 149 to 227 and 241 to 261; these read RSRQ…NDGH and MEEDERNNIGTSSACCSCRTG. Over residues 194-221 the composition is skewed to polar residues; it reads SGVSSQPESQPVVNHRGVSSQPESQPVN.

The protein belongs to the RING-type zinc finger family. ATL subfamily.

The protein localises to the membrane. The catalysed reaction is S-ubiquitinyl-[E2 ubiquitin-conjugating enzyme]-L-cysteine + [acceptor protein]-L-lysine = [E2 ubiquitin-conjugating enzyme]-L-cysteine + N(6)-ubiquitinyl-[acceptor protein]-L-lysine.. It functions in the pathway protein modification; protein ubiquitination. The sequence is that of RING-H2 finger protein ATL58 (ATL58) from Arabidopsis thaliana (Mouse-ear cress).